A 1255-amino-acid chain; its full sequence is Receptor tyrosine-protein kinase erbB-2 (1255 aa).

An N-terminal signal peptide occupies residues 1–22 (MELAALCRWGLLLALLPPGAAS). The Extracellular portion of the chain corresponds to 23–652 (TQVCTGTDMK…PAEQRASPLT (630 aa)). An intrachain disulfide couples cysteine 26 to cysteine 53. N-linked (GlcNAc...) asparagine glycans are attached at residues asparagine 68 and asparagine 124. 16 cysteine pairs are disulfide-bonded: cysteine 162-cysteine 192, cysteine 195-cysteine 204, cysteine 199-cysteine 212, cysteine 220-cysteine 227, cysteine 224-cysteine 235, cysteine 236-cysteine 244, cysteine 240-cysteine 252, cysteine 255-cysteine 264, cysteine 268-cysteine 295, cysteine 299-cysteine 311, cysteine 315-cysteine 331, cysteine 334-cysteine 338, cysteine 342-cysteine 367, cysteine 475-cysteine 504, cysteine 511-cysteine 520, and cysteine 515-cysteine 528. The residue at position 182 (threonine 182) is a Phosphothreonine. N-linked (GlcNAc...) asparagine glycosylation is present at asparagine 187. Asparagine 259 carries an N-linked (GlcNAc...) asparagine glycan. Asparagine 530 carries an N-linked (GlcNAc...) asparagine glycan. Cystine bridges form between cysteine 531/cysteine 540, cysteine 544/cysteine 560, cysteine 563/cysteine 576, cysteine 567/cysteine 584, cysteine 587/cysteine 596, cysteine 600/cysteine 623, cysteine 626/cysteine 634, and cysteine 630/cysteine 642. N-linked (GlcNAc...) asparagine glycosylation is present at asparagine 571. The N-linked (GlcNAc...) asparagine glycan is linked to asparagine 629. Residues 653–675 (SIISAVVGILLVVVLGVVFGILI) traverse the membrane as a helical segment. Residues 676–689 (KRRQQKIRKYTMRR) are required for interaction with KPNB1 and EEA1. The Nuclear localization signal signature appears at 676-689 (KRRQQKIRKYTMRR). Over 676–1255 (KRRQQKIRKY…PEYLGLDVPV (580 aa)) the chain is Cytoplasmic. The Protein kinase domain maps to 720-987 (LRKVKVLGSG…RMARDPQRFV (268 aa)). ATP contacts are provided by residues 726-734 (LGSGAFGTV) and lysine 753. Aspartate 845 serves as the catalytic Proton acceptor. At tyrosine 877 the chain carries Phosphotyrosine. Disordered regions lie at residues 1035-1179 (PAPG…GKNG) and 1196-1255 (YLTP…DVPV). Phosphoserine occurs at positions 1054, 1078, 1083, and 1107. A phosphotyrosine mark is found at tyrosine 1112 and tyrosine 1139. Positions 1146–1155 (RPQPPSPREG) are enriched in pro residues. A Phosphoserine modification is found at serine 1151. Position 1166 is a phosphothreonine (threonine 1166). The segment at 1195–1197 (EYL) is interaction with PIK3C2B. Phosphotyrosine is present on tyrosine 1196. Tyrosine 1248 is subject to Phosphotyrosine; by autocatalysis.

Belongs to the protein kinase superfamily. Tyr protein kinase family. EGF receptor subfamily. In terms of assembly, homodimer. Heterodimer with EGFR, ERBB3 and ERBB4. Part of a complex with EGFR and either PIK3C2A or PIK3C2B. May interact with PIK3C2B when phosphorylated on Tyr-1196. Interacts with PLXNB1. Interacts (when phosphorylated on Tyr-1248) with MEMO1. Interacts with MUC1; the interaction is enhanced by heregulin (HRG). Interacts (when phosphorylated on Tyr-1139) with GRB7 (via SH2 domain). Interacts (when phosphorylated on Tyr-1248) with ERBIN. Interacts with KPNB1, RANBP2, EEA1, CRM1 and CLTC. Interacts with PTK6. Interacts with RPA194 and ACTB. Interacts with PRKCABP, SRC and MYOC. Interacts (preferentially with the tyrosine phosphorylated form) with CPNE3; this interaction occurs at the cell membrane and is increased in a growth factor heregulin-dependent manner. Interacts with HSP90AA1 and HSP90AB1 in an ATP-dependent manner; the interaction suppresses ERBB2 kinase activity. Interacts with SORL1; this interaction regulates ERBB2 subcellular distribution by promoting its recycling after internalization from endosomes back to the plasma membrane, hence stimulates ERBB2-mediated signaling. Interacts with SH3BGRL. Interacts with ROR1. Post-translationally, autophosphorylated. Autophosphorylation occurs in trans, i.e. one subunit of the dimeric receptor phosphorylates tyrosine residues on the other subunit. Ligand-binding increases phosphorylation on tyrosine residues. Signaling via SEMA4C promotes phosphorylation at Tyr-1248. Dephosphorylated by PTPN12. In terms of tissue distribution, expressed in a variety of tumor tissues including primary breast tumors and tumors from small bowel, esophagus, kidney and mouth.

The protein resides in the cell membrane. It localises to the cell projection. The protein localises to the ruffle membrane. Its subcellular location is the early endosome. It is found in the cytoplasm. The protein resides in the perinuclear region. It localises to the nucleus. It catalyses the reaction L-tyrosyl-[protein] + ATP = O-phospho-L-tyrosyl-[protein] + ADP + H(+). With respect to regulation, activated by dimerization. Not activated by EGF, TGF-alpha and amphiregulin. Interaction with PTK6 increases its intrinsic kinase activity. Functionally, protein tyrosine kinase that is part of several cell surface receptor complexes, but that apparently needs a coreceptor for ligand binding. Essential component of a neuregulin-receptor complex, although neuregulins do not interact with it alone. GP30 is a potential ligand for this receptor. Regulates outgrowth and stabilization of peripheral microtubules (MTs). Upon ERBB2 activation, the MEMO1-RHOA-DIAPH1 signaling pathway elicits the phosphorylation and thus the inhibition of GSK3B at cell membrane. This prevents the phosphorylation of APC and CLASP2, allowing its association with the cell membrane. In turn, membrane-bound APC allows the localization of MACF1 to the cell membrane, which is required for microtubule capture and stabilization. Its function is as follows. In the nucleus is involved in transcriptional regulation. Associates with the 5'-TCAAATTC-3' sequence in the PTGS2/COX-2 promoter and activates its transcription. Implicated in transcriptional activation of CDKN1A; the function involves STAT3 and SRC. Involved in the transcription of rRNA genes by RNA Pol I and enhances protein synthesis and cell growth. The protein is Receptor tyrosine-protein kinase erbB-2 (ERBB2) of Homo sapiens (Human).